We begin with the raw amino-acid sequence, 276 residues long: Phospholipid phosphatase 2 (276 aa).

Residues 1–4 (MERR) are Cytoplasmic-facing. The helical transmembrane segment at 5 to 25 (WVFVLLDVLCVLVASLPFIIL) threads the bilayer. Residues 26 to 51 (TLVNAPYKRGFYCGDDSIRYPYRPDT) lie on the Lumenal side of the membrane. A helical transmembrane segment spans residues 52-72 (ITHGLMAGVIITATVILVSLG). The Cytoplasmic segment spans residues 73–87 (EAYLVYTDRLYSRSN). The helical transmembrane segment at 88–108 (FNNYVAAIYKVLGTFLFGAAV) threads the bilayer. Residues 109–161 (SQSLTDLAKYMIGRLRPSFLAVCDPDWSQVNCSGYVQLEVCRGSPANVTEARL) are Lumenal-facing. A phosphatase sequence motif I region spans residues 117 to 125 (KYMIGRLRP). N-linked (GlcNAc...) asparagine glycans are attached at residues N139 and N155. The helical transmembrane segment at 162–182 (SFYSGHSSFGMYCMLFLALYV) threads the bilayer. The segment at 164-167 (YSGH) is phosphatase sequence motif II. The active-site Proton donors is the H167. Residues 183–189 (QARLCWK) lie on the Cytoplasmic side of the membrane. Residues 190–210 (WARLLRPTVQFFLVAFAIYVG) form a helical membrane-spanning segment. Residues 211 to 218 (YTRVSDHK) lie on the Lumenal side of the membrane. Residues 212 to 223 (TRVSDHKHHWSD) are phosphatase sequence motif III. The active-site Nucleophile is H219. A helical transmembrane segment spans residues 219 to 239 (HHWSDVLVGLLQGALVACLTV). Topologically, residues 240 to 276 (RYVSDFFKSRPPQPCQEDEVPERKPSLSLTLTLGDRP) are cytoplasmic. Residues 251–276 (PQPCQEDEVPERKPSLSLTLTLGDRP) form a disordered region.

Belongs to the PA-phosphatase related phosphoesterase family. As to quaternary structure, forms functional homodimers and homooligomers. Can also form heterooligomers with PLPP1 and PLPP3. N-glycosylated. Expressed at high levels in lung, liver and kidney; at low levels in heart and brain, and was not detected in skeletal muscle.

It localises to the membrane. The protein resides in the cell membrane. It is found in the early endosome membrane. The protein localises to the endoplasmic reticulum membrane. It carries out the reaction a 1,2-diacyl-sn-glycero-3-phosphate + H2O = a 1,2-diacyl-sn-glycerol + phosphate. The enzyme catalyses 1,2-dihexadecanoyl-sn-glycero-3-phosphate + H2O = 1,2-dihexadecanoyl-sn-glycerol + phosphate. It catalyses the reaction 1,2-di-(9Z-octadecenoyl)-sn-glycero-3-phosphate + H2O = 1,2-di-(9Z-octadecenoyl)-sn-glycerol + phosphate. The catalysed reaction is a monoacyl-sn-glycero-3-phosphate + H2O = a monoacylglycerol + phosphate. It carries out the reaction (9Z)-octadecenoyl-sn-glycero-3-phosphate + H2O = (9Z-octadecenoyl)-glycerol + phosphate. The enzyme catalyses sphing-4-enine 1-phosphate + H2O = sphing-4-enine + phosphate. It catalyses the reaction an N-acylsphing-4-enine 1-phosphate + H2O = an N-acylsphing-4-enine + phosphate. The catalysed reaction is N-(octanoyl)-sphing-4-enine-1-phosphate + H2O = N-octanoylsphing-4-enine + phosphate. It carries out the reaction N-(9Z-octadecenoyl)-ethanolamine phosphate + H2O = N-(9Z-octadecenoyl) ethanolamine + phosphate. It participates in lipid metabolism; phospholipid metabolism. Its activity is regulated as follows. Magnesium-independent phospholipid phosphatase. Insensitive to N-ethylmaleimide. Its function is as follows. Magnesium-independent phospholipid phosphatase that catalyzes the dephosphorylation of a variety of glycerolipid and sphingolipid phosphate esters including phosphatidate/PA, lysophosphatidate/LPA, sphingosine 1-phosphate/S1P and ceramide 1-phosphate/C1P. Has no apparent extracellular phosphatase activity and therefore most probably acts intracellularly. Also acts on N-oleoyl ethanolamine phosphate/N-(9Z-octadecenoyl)-ethanolamine phosphate, a potential physiological compound. Through dephosphorylation of these bioactive lipid mediators produces new bioactive compounds and may regulate signal transduction in different cellular processes. Indirectly regulates, for instance, cell cycle G1/S phase transition through its phospholipid phosphatase activity. The protein is Phospholipid phosphatase 2 of Mus musculus (Mouse).